A 2403-amino-acid chain; its full sequence is Highly reducing polyketide synthase fogA (2403 aa).

The Ketosynthase family 3 (KS3) domain maps to 3–428 (DDPPCIVGMA…GANAHVILES (426 aa)). Active-site for beta-ketoacyl synthase activity residues include Cys-176, His-311, and His-350. The segment at 538-858 (VFTGQGAQYA…PYAPSLVRKE (321 aa)) is malonyl-CoA:ACP transacylase (MAT) domain. The For malonyltransferase activity role is filled by Ser-632. Residues 929 to 1068 (HELLGTFALT…GSIRVVEPLT (140 aa)) form an N-terminal hotdog fold region. The segment at 929-1238 (HELLGTFALT…DARMSLYTGK (310 aa)) is dehydratase (DH) domain. Residues 929–1241 (HELLGTFALT…MSLYTGKSSA (313 aa)) form the PKS/mFAS DH domain. His-961 acts as the Proton acceptor; for dehydratase activity in catalysis. Residues 1084 to 1241 (SFEASPTNRW…MSLYTGKSSA (158 aa)) form a C-terminal hotdog fold region. Residue Asp-1152 is the Proton donor; for dehydratase activity of the active site. The segment at 1663–1981 (GATDSMFFQQ…QQDRIGKIVI (319 aa)) is enoyl reductase (ER) domain. The segment at 2006 to 2185 (VYLLIGCLGG…AVAVGLGMIS (180 aa)) is ketoreductase (KR) domain. The disordered stretch occupies residues 2280–2300 (AQNSTSSSGSNSNTPTTAAPW). The span at 2282 to 2296 (NSTSSSGSNSNTPTT) shows a compositional bias: low complexity. Positions 2320 to 2398 (SLNAAILRLI…GLAVVVEGKL (79 aa)) constitute a Carrier domain. Ser-2357 is subject to O-(pantetheine 4'-phosphoryl)serine.

The cofactor is pantetheine 4'-phosphate.

It participates in secondary metabolite biosynthesis. Its function is as follows. Highly reducing polyketide synthase; part of the gene cluster that mediates the biosynthesis of flavoglaucin and congeners (including aspergin, dihydroauroglaucin and auroglaucin), prenylated salicylaldehyde derivatives carrying a saturated or an unsaturated C-7 side chain. FogA releases the carboxylic acid (8E,10E,12E)-3,5,7-trihydroxytetradeca-8,10,12-trienoic acid as its product, as well as derivatives with one and two double bonds. FogA is indeed able to reduce the initial triketide, thus being at least partially responsible for the differently saturated heptyl side chains of flavoglaucin congeners. The oxidoreductases fogB, fogC and fogD modify the nascent polyketide in fogA-bound form and, together, fogA, fogB, fogC and fogD are necessary for the formation of the aromatic core and the cyclized PKS products are released as salicyl alcohols. In particular, fogB is responsible for oxidation of a hydroxyl group or reduction of remaining double bond(s) at the C-7 residue whereas fogD is probably involved in the reductive release of the modified PKS products. The cytochrome P450 monooxygenase fogE is then responsible for the hydroxylation at C-3 of the benzene ring. The fogE products are substrates of the prenyltransferase fogH and the prenylated benzyl alcohols are subsequently oxidized by the fogF to produce the final aryl aldehydes flavoglaucin and congeners. The short-chain dehydrogenase fogG does not seem to be involved in the biosynthesis of the prenylated salicylaldehyde derivatives. This chain is Highly reducing polyketide synthase fogA, found in Aspergillus ruber (strain CBS 135680).